A 199-amino-acid chain; its full sequence is Recombination protein RecR (199 aa).

The C4-type zinc finger occupies 58–73 (CKTCGNIDTQSPCTVC). Residues 81 to 176 (AMIVVVADVA…KVTRLAHGVP (96 aa)) form the Toprim domain.

Belongs to the RecR family.

Functionally, may play a role in DNA repair. It seems to be involved in an RecBC-independent recombinational process of DNA repair. It may act with RecF and RecO. The polypeptide is Recombination protein RecR (Bradyrhizobium sp. (strain BTAi1 / ATCC BAA-1182)).